Here is a 534-residue protein sequence, read N- to C-terminus: High-affinity nicotinic acid transporter (534 aa).

Residues 1 to 130 are Extracellular-facing; sequence MSNKFTMESP…DIHLVGTQYN (130 aa). A disordered region spans residues 21 to 56; that stretch reads SPTNDGSEEKPTEVTFQEDEGHDASLHNRSHDKKSE. Ser-27 is modified (phosphoserine). Residues 131–151 form a helical membrane-spanning segment; that stretch reads TCVTVFFATYVLFDPIGTNLL. Lys-152 is a topological domain (cytoplasmic). A helical membrane pass occupies residues 153 to 173; that stretch reads IMGPPLMMSICLTCFGAISLG. The Extracellular segment spans residues 174-187; sequence TAWVKNYAQLIVVR. The chain crosses the membrane as a helical span at residues 188 to 208; sequence LLLGAFEGMIYPAINMYLSVC. Residues 209 to 217 lie on the Cytoplasmic side of the membrane; the sequence is YRREQYALR. A helical transmembrane segment spans residues 218 to 238; the sequence is FAFVFSAACLSSSFGGLIAYG. Over 239–250 the chain is Extracellular; that stretch reads CSKISGSLKDWQ. The helical transmembrane segment at 251-271 threads the bilayer; that stretch reads YIYIVEGCISLGFVPFYAFGL. Over 272–323 the chain is Cytoplasmic; sequence SKNLEDSWFFNKEEKEYISERYKTMNTFDPDEKFEWFQVWQAVKDVKTWASA. Lys-283 is covalently cross-linked (Glycyl lysine isopeptide (Lys-Gly) (interchain with G-Cter in ubiquitin)). A helical transmembrane segment spans residues 324 to 344; sequence VALFGIDLTTFGLTVFLPIII. Residues 345–355 lie on the Extracellular side of the membrane; sequence TSMGFTNVRAQ. The helical transmembrane segment at 356 to 376 threads the bilayer; it reads LMTVPIYFLTAIVFFICAVWS. Topologically, residues 377-384 are cytoplasmic; sequence DRIKLRSP. The helical transmembrane segment at 385 to 405 threads the bilayer; it reads FILGACLTTSIGIAIVLGSQV. The Extracellular segment spans residues 406–410; it reads HGVRY. A helical membrane pass occupies residues 411–431; it reads FGVYILCMGIYVNAACNCLWL. Over 432–444 the chain is Cytoplasmic; sequence SGNTGNYFKRATA. Residues 445–465 traverse the membrane as a helical segment; that stretch reads LGINLFFGSGSGLVSGQIFVA. Residues 466-474 lie on the Extracellular side of the membrane; that stretch reads KDKPRYIKG. The helical transmembrane segment at 475–495 threads the bilayer; it reads LSISLAFQVFSIFMTVVQIFL. The Cytoplasmic segment spans residues 496–534; the sequence is YKRENDKKKAIIDRCNELGEPIPYDERLSDKNPEFKYMY.

This sequence belongs to the major facilitator superfamily. Allantoate permease family.

The protein localises to the membrane. Its function is as follows. Involved in the uptake of nicotinic acid. This Saccharomyces cerevisiae (strain ATCC 204508 / S288c) (Baker's yeast) protein is High-affinity nicotinic acid transporter (TNA1).